A 429-amino-acid polypeptide reads, in one-letter code: Histidine--tRNA ligase (429 aa).

It belongs to the class-II aminoacyl-tRNA synthetase family. As to quaternary structure, homodimer.

The protein localises to the cytoplasm. It carries out the reaction tRNA(His) + L-histidine + ATP = L-histidyl-tRNA(His) + AMP + diphosphate + H(+). The protein is Histidine--tRNA ligase of Alkalilimnicola ehrlichii (strain ATCC BAA-1101 / DSM 17681 / MLHE-1).